Consider the following 204-residue polypeptide: Ribonuclease HII (204 aa).

The region spanning 8–197 (RLICGVDEAG…VRELLQNPPL (190 aa)) is the RNase H type-2 domain. A divalent metal cation-binding residues include Asp14, Glu15, and Asp106.

The protein belongs to the RNase HII family. It depends on Mn(2+) as a cofactor. Mg(2+) is required as a cofactor.

The protein localises to the cytoplasm. The catalysed reaction is Endonucleolytic cleavage to 5'-phosphomonoester.. Functionally, endonuclease that specifically degrades the RNA of RNA-DNA hybrids. The chain is Ribonuclease HII from Azoarcus sp. (strain BH72).